A 570-amino-acid polypeptide reads, in one-letter code: Glutamate--tRNA ligase (570 aa).

Positions 107–117 (PNPDFVLHLGS) match the 'HIGH' region motif.

This sequence belongs to the class-I aminoacyl-tRNA synthetase family. Glutamate--tRNA ligase type 2 subfamily.

The protein localises to the cytoplasm. The enzyme catalyses tRNA(Glu) + L-glutamate + ATP = L-glutamyl-tRNA(Glu) + AMP + diphosphate. Its function is as follows. Catalyzes the attachment of glutamate to tRNA(Glu) in a two-step reaction: glutamate is first activated by ATP to form Glu-AMP and then transferred to the acceptor end of tRNA(Glu). The sequence is that of Glutamate--tRNA ligase from Pyrobaculum aerophilum (strain ATCC 51768 / DSM 7523 / JCM 9630 / CIP 104966 / NBRC 100827 / IM2).